The primary structure comprises 368 residues: Glutaminyl-peptide cyclotransferase (368 aa).

The N-terminal stretch at 1–23 (MAGERRDSKAAAFFCLAWALCLA) is a signal peptide. N-linked (GlcNAc...) asparagine glycosylation occurs at N53. C143 and C169 are oxidised to a cystine. D164 provides a ligand contact to Zn(2+). The Proton acceptor role is filled by E207. E208 contacts Zn(2+). D254 serves as the catalytic Proton acceptor. N-linked (GlcNAc...) asparagine glycosylation is present at N292. Residue H336 participates in Zn(2+) binding. N352 carries N-linked (GlcNAc...) asparagine glycosylation.

This sequence belongs to the glutaminyl-peptide cyclotransferase family. In terms of tissue distribution, expressed by the venom gland.

The protein localises to the secreted. It carries out the reaction N-terminal L-glutaminyl-[peptide] = N-terminal 5-oxo-L-prolyl-[peptide] + NH4(+). Responsible for the biosynthesis of pyroglutamyl peptides. Has a bias against acidic and tryptophan residues adjacent to the N-terminal glutaminyl residue and a lack of importance of chain length after the second residue. Also catalyzes N-terminal pyroglutamate formation. This chain is Glutaminyl-peptide cyclotransferase (QPCT), found in Boiga irregularis (Brown tree snake).